A 693-amino-acid polypeptide reads, in one-letter code: Elongation factor G (693 aa).

The region spanning 7 to 282 (EKIRNIGITA…SVIDYLPAPT (276 aa)) is the tr-type G domain. GTP contacts are provided by residues 16 to 23 (AHIDAGKT), 80 to 84 (DTPGH), and 134 to 137 (NKLD).

The protein belongs to the TRAFAC class translation factor GTPase superfamily. Classic translation factor GTPase family. EF-G/EF-2 subfamily.

The protein resides in the cytoplasm. Catalyzes the GTP-dependent ribosomal translocation step during translation elongation. During this step, the ribosome changes from the pre-translocational (PRE) to the post-translocational (POST) state as the newly formed A-site-bound peptidyl-tRNA and P-site-bound deacylated tRNA move to the P and E sites, respectively. Catalyzes the coordinated movement of the two tRNA molecules, the mRNA and conformational changes in the ribosome. In Granulibacter bethesdensis (strain ATCC BAA-1260 / CGDNIH1), this protein is Elongation factor G.